The sequence spans 225 residues: uncharacterized protein (225 aa).

This is an uncharacterized protein from Amsacta moorei entomopoxvirus (AmEPV).